A 619-amino-acid chain; its full sequence is Laccase (619 aa).

A signal peptide spans 1-21 (MKFLGIAALVAGLLAPSLVLG). Residues 22 to 49 (APAPGTEGVNLLTPVDKRQDSQAERYGG) constitute a propeptide that is removed on maturation. Cysteines 55 and 63 form a disulfide. Plastocyanin-like domains follow at residues 84 to 207 (TRRY…IVIN) and 216 to 373 (VDLG…LPTN). A glycan (N-linked (GlcNAc...) asparagine) is linked at asparagine 139. Residues histidine 144, histidine 146, histidine 189, and histidine 191 each contribute to the Cu cation site. Intrachain disulfides connect cysteine 165-cysteine 586 and cysteine 349-cysteine 383. Residues asparagine 282, asparagine 295, and asparagine 340 are each glycosylated (N-linked (GlcNAc...) asparagine). 2 N-linked (GlcNAc...) asparagine glycosylation sites follow: asparagine 422 and asparagine 444. Residues 431 to 566 (NKPVLEYVLT…GGLSNQFLER (136 aa)) form the Plastocyanin-like 3 domain. 7 residues coordinate Cu cation: histidine 477, histidine 480, histidine 482, histidine 548, cysteine 549, histidine 550, and histidine 554. Positions 607–619 (RSGVKAREVKMKW) are excised as a propeptide.

Belongs to the multicopper oxidase family. It depends on Cu cation as a cofactor.

Its subcellular location is the secreted. It catalyses the reaction 4 hydroquinone + O2 = 4 benzosemiquinone + 2 H2O. Its function is as follows. Lignin degradation and detoxification of lignin-derived products. This Neurospora crassa (strain ATCC 24698 / 74-OR23-1A / CBS 708.71 / DSM 1257 / FGSC 987) protein is Laccase (lacc).